We begin with the raw amino-acid sequence, 416 residues long: LysM domain-containing GPI-anchored protein 1 (416 aa).

Positions Met-1–Ala-27 are cleaved as a signal peptide. 4 disulfides stabilise this stretch: Cys-34–Cys-100, Cys-40–Cys-163, Cys-98–Cys-161, and Cys-100–Cys-163. N-linked (GlcNAc...) asparagine glycosylation is present at Asn-37. The LysM 1 domain occupies Thr-110–Ile-157. Residue Asn-165 is glycosylated (N-linked (GlcNAc...) asparagine). The LysM 2 domain maps to Leu-176 to Val-219. Intrachain disulfides connect Cys-224/Cys-256 and Cys-251/Cys-279. N-linked (GlcNAc...) asparagine glycosylation is present at Asn-241. N-linked (GlcNAc...) asparagine glycans are attached at residues Asn-288, Asn-299, and Asn-310. The interval Asp-356–Leu-376 is disordered. Ala-391 is lipidated: GPI-anchor amidated alanine. Positions Ser-392–Ser-416 are cleaved as a propeptide — removed in mature form.

Interacts with peptidoglycans.

The protein localises to the cell membrane. The protein resides in the secreted. Required as a cell surface receptor for peptidoglycan (PGN) elicitor signaling leading to innate immunity. Plays an essential role in detecting PGNs and restricting bacterial growth (of Pseudomonas syringae pv. tomato DC3000 for example). This Arabidopsis thaliana (Mouse-ear cress) protein is LysM domain-containing GPI-anchored protein 1 (LYM1).